A 478-amino-acid chain; its full sequence is MNEHALKNIPLRLYNTAERQKQELKPIKGNHIQLYTCGPTVYHYAHIGNFRTYIFEDLLRRTIQFFGFSITQVMNLTDVDDKTIRGAIAKGITLDEYTKPYKDAFFEDLKTLNIQSAEYYPAATDYIPAMIEMIKVLLDKKVAYKGGDGSIYYAINQFPRYGCLSHLHLEDLQAGASERVAADEYEKEHVADFVLWKSYDSERDGQIYWESPFGLGRPGWHLECSAMAMHLLGETIDIHVGGIDNMFPHHENEIAQSEACSGKKFVNLWMHAEHLVVDQKKMSKSLGNFYTLRDLLNKGFTGIQVRYLLLQTHYKTQLNFTFQGVESVKSSLQRLNDFIQRIYNIQTLQSDGQVDLLVNDALIRFAEALADDLNISSALAAIFDFVREINCLCDVNQVSQKEAETVINLMKKFDTILGVLTFDKREESIPVDLQEAFAKRQQARQEKNWTLSDELRDFIHQRGYLIEDTPQGTRLKKQ.

Cysteine 37 is a binding site for Zn(2+). The 'HIGH' region motif lies at 39–49; sequence PTVYHYAHIGN. 3 residues coordinate Zn(2+): cysteine 224, histidine 249, and glutamate 253. Residues 281–285 carry the 'KMSKS' region motif; it reads KMSKS. Position 284 (lysine 284) interacts with ATP.

Belongs to the class-I aminoacyl-tRNA synthetase family. In terms of assembly, monomer. Zn(2+) serves as cofactor.

Its subcellular location is the cytoplasm. The enzyme catalyses tRNA(Cys) + L-cysteine + ATP = L-cysteinyl-tRNA(Cys) + AMP + diphosphate. The protein is Cysteine--tRNA ligase of Protochlamydia amoebophila (strain UWE25).